We begin with the raw amino-acid sequence, 387 residues long: DNA double-strand break repair protein Mre11 (387 aa).

Mn(2+)-binding residues include D11, H13, D52, and D87. H88 serves as the catalytic Proton donor. The Mn(2+) site is built by H159, H190, and H192.

It belongs to the MRE11/RAD32 family. Homodimer. Forms a heterotetramer composed of two Mre11 subunits and two Rad50 subunits. Interacts with HerA. The cofactor is Mn(2+).

Nuclease activity is regulated by Rad50. In terms of biological role, part of the Rad50/Mre11 complex, which is involved in the early steps of DNA double-strand break (DSB) repair. The complex may facilitate opening of the processed DNA ends to aid in the recruitment of HerA and NurA. Mre11 binds to DSB ends and has both double-stranded 3'-5' exonuclease activity and single-stranded endonuclease activity. This is DNA double-strand break repair protein Mre11 from Sulfurisphaera tokodaii (strain DSM 16993 / JCM 10545 / NBRC 100140 / 7) (Sulfolobus tokodaii).